We begin with the raw amino-acid sequence, 197 residues long: GTP cyclohydrolase-2 (197 aa).

Residue 49 to 53 (RVHSE) participates in GTP binding. The Zn(2+) site is built by cysteine 54, cysteine 65, and cysteine 67. GTP-binding positions include glutamine 70, 92 to 94 (EGR), and threonine 114. The Proton acceptor role is filled by aspartate 126. Arginine 128 functions as the Nucleophile in the catalytic mechanism. GTP contacts are provided by threonine 149 and lysine 154.

The protein belongs to the GTP cyclohydrolase II family. Homodimer. The cofactor is Zn(2+).

It carries out the reaction GTP + 4 H2O = 2,5-diamino-6-hydroxy-4-(5-phosphoribosylamino)-pyrimidine + formate + 2 phosphate + 3 H(+). It participates in cofactor biosynthesis; riboflavin biosynthesis; 5-amino-6-(D-ribitylamino)uracil from GTP: step 1/4. Catalyzes the conversion of GTP to 2,5-diamino-6-ribosylamino-4(3H)-pyrimidinone 5'-phosphate (DARP), formate and pyrophosphate. The polypeptide is GTP cyclohydrolase-2 (Cronobacter sakazakii (strain ATCC BAA-894) (Enterobacter sakazakii)).